Reading from the N-terminus, the 137-residue chain is Aspartate 1-decarboxylase (137 aa).

The active-site Schiff-base intermediate with substrate; via pyruvic acid is the serine 25. Serine 25 is subject to Pyruvic acid (Ser). Threonine 57 contributes to the substrate binding site. Catalysis depends on tyrosine 58, which acts as the Proton donor. 73–75 is a substrate binding site; sequence GAA.

The protein belongs to the PanD family. Heterooctamer of four alpha and four beta subunits. Pyruvate is required as a cofactor. In terms of processing, is synthesized initially as an inactive proenzyme, which is activated by self-cleavage at a specific serine bond to produce a beta-subunit with a hydroxyl group at its C-terminus and an alpha-subunit with a pyruvoyl group at its N-terminus.

The protein resides in the cytoplasm. It catalyses the reaction L-aspartate + H(+) = beta-alanine + CO2. It functions in the pathway cofactor biosynthesis; (R)-pantothenate biosynthesis; beta-alanine from L-aspartate: step 1/1. Catalyzes the pyruvoyl-dependent decarboxylation of aspartate to produce beta-alanine. In Thermobifida fusca (strain YX), this protein is Aspartate 1-decarboxylase.